The primary structure comprises 459 residues: Putrescine aminotransferase (459 aa).

Residues 150-151 (GT) and glutamine 274 each bind pyridoxal 5'-phosphate. Lysine 300 carries the N6-(pyridoxal phosphate)lysine modification. Threonine 332 lines the pyridoxal 5'-phosphate pocket.

This sequence belongs to the class-III pyridoxal-phosphate-dependent aminotransferase family. Putrescine aminotransferase subfamily. Requires pyridoxal 5'-phosphate as cofactor.

The catalysed reaction is an alkane-alpha,omega-diamine + 2-oxoglutarate = an omega-aminoaldehyde + L-glutamate. It carries out the reaction putrescine + 2-oxoglutarate = 1-pyrroline + L-glutamate + H2O. It catalyses the reaction cadaverine + 2-oxoglutarate = 5-aminopentanal + L-glutamate. The protein operates within amine and polyamine degradation; putrescine degradation; 4-aminobutanal from putrescine (transaminase route): step 1/1. In terms of biological role, catalyzes the aminotransferase reaction from putrescine to 2-oxoglutarate, leading to glutamate and 4-aminobutanal, which spontaneously cyclizes to form 1-pyrroline. This is the first step in one of two pathways for putrescine degradation, where putrescine is converted into 4-aminobutanoate (gamma-aminobutyrate or GABA) via 4-aminobutanal. Also functions as a cadaverine transaminase in a a L-lysine degradation pathway to succinate that proceeds via cadaverine, glutarate and L-2-hydroxyglutarate. In Escherichia fergusonii (strain ATCC 35469 / DSM 13698 / CCUG 18766 / IAM 14443 / JCM 21226 / LMG 7866 / NBRC 102419 / NCTC 12128 / CDC 0568-73), this protein is Putrescine aminotransferase.